Here is a 150-residue protein sequence, read N- to C-terminus: UPF0208 membrane protein VC_1099 (150 aa).

2 helical membrane-spanning segments follow: residues 42 to 62 (FAIK…MVFA) and 70 to 90 (AIVV…WLGH).

The protein belongs to the UPF0208 family.

Its subcellular location is the cell inner membrane. The protein is UPF0208 membrane protein VC_1099 of Vibrio cholerae serotype O1 (strain ATCC 39315 / El Tor Inaba N16961).